The sequence spans 1160 residues: Pesticidal crystal protein Cry8Ca (1160 aa).

Belongs to the delta endotoxin family.

Its function is as follows. Promotes colloidosmotic lysis by binding to the midgut epithelial cells of insects. Active on various scarabaeid beetles such as Anomala cuprea, A.rufocuprea and Popillia japonica. This chain is Pesticidal crystal protein Cry8Ca (cry8Ca), found in Bacillus thuringiensis subsp. japonensis.